A 270-amino-acid chain; its full sequence is Sulfur carrier protein FdhD (270 aa).

C108 serves as the catalytic Cysteine persulfide intermediate. A Mo-bis(molybdopterin guanine dinucleotide)-binding site is contributed by 247–252; the sequence is FIRDGR.

This sequence belongs to the FdhD family.

It is found in the cytoplasm. In terms of biological role, required for formate dehydrogenase (FDH) activity. Acts as a sulfur carrier protein that transfers sulfur from IscS to the molybdenum cofactor prior to its insertion into FDH. This is Sulfur carrier protein FdhD from Halalkalibacterium halodurans (strain ATCC BAA-125 / DSM 18197 / FERM 7344 / JCM 9153 / C-125) (Bacillus halodurans).